Here is a 319-residue protein sequence, read N- to C-terminus: Ankyrin repeat domain-containing protein 1 (319 aa).

Residues 63–89 (EKQLEAELKKKKLEQRSKLENLEDLEI) adopt a coiled-coil conformation. ANK repeat units follow at residues 152 to 181 (YKRTALHRACLEGHLAIVEKLMEAGAQIEF), 185 to 214 (LESTAIHWACRGGNLEVLKLLLNKGAKISA), 218 to 247 (LLSTALHVAVRTGHYECAEHLIACEADLNA), 251 to 280 (EGDTPLHDAVRLNRYKMIRLLIMYGADLTI), and 284 to 315 (AGKTPMDLVLNWQNGTKAIFDSLKENSYKTSR).

As to quaternary structure, interacts with TTN/titin and YBX1.

It is found in the nucleus. Its function is as follows. May play an important role in endothelial cell activation. May act as a nuclear transcription factor that negatively regulates the expression of cardiac genes. The sequence is that of Ankyrin repeat domain-containing protein 1 (ANKRD1) from Oryctolagus cuniculus (Rabbit).